The primary structure comprises 155 residues: Troponin C, isoform 3 (155 aa).

EF-hand domains are found at residues 11–46, 47–82, 87–122, and 123–155; these read EQIA…MGQP, FDKK…FIVE, AMQK…LDDQ, and LTEQ…MTGE. The Ca(2+) site is built by D60, D62, S64, R66, and E71. The Ca(2+) site is built by D136, D138, S140, T142, and E147.

It belongs to the troponin C family. Present in both larval and adult muscles.

In Drosophila melanogaster (Fruit fly), this protein is Troponin C, isoform 3 (TpnC73F).